The following is a 422-amino-acid chain: UDP-N-acetylglucosamine 1-carboxyvinyltransferase (422 aa).

22–23 (KN) serves as a coordination point for phosphoenolpyruvate. Residue R94 coordinates UDP-N-acetyl-alpha-D-glucosamine. C118 serves as the catalytic Proton donor. C118 carries the 2-(S-cysteinyl)pyruvic acid O-phosphothioketal modification. UDP-N-acetyl-alpha-D-glucosamine contacts are provided by residues 123–127 (RPVDL), D308, and I330.

It belongs to the EPSP synthase family. MurA subfamily.

It is found in the cytoplasm. It catalyses the reaction phosphoenolpyruvate + UDP-N-acetyl-alpha-D-glucosamine = UDP-N-acetyl-3-O-(1-carboxyvinyl)-alpha-D-glucosamine + phosphate. It participates in cell wall biogenesis; peptidoglycan biosynthesis. Functionally, cell wall formation. Adds enolpyruvyl to UDP-N-acetylglucosamine. This chain is UDP-N-acetylglucosamine 1-carboxyvinyltransferase, found in Dinoroseobacter shibae (strain DSM 16493 / NCIMB 14021 / DFL 12).